The chain runs to 464 residues: Cysteine--tRNA ligase (464 aa).

Zn(2+) is bound at residue C28. The 'HIGH' region signature appears at 30–40 (PTVYDHSHIGH). 3 residues coordinate Zn(2+): C205, H230, and E234. The 'KMSKS' region motif lies at 263-267 (KMSKS). K266 provides a ligand contact to ATP.

This sequence belongs to the class-I aminoacyl-tRNA synthetase family. The cofactor is Zn(2+).

Its subcellular location is the cytoplasm. The enzyme catalyses tRNA(Cys) + L-cysteine + ATP = L-cysteinyl-tRNA(Cys) + AMP + diphosphate. The sequence is that of Cysteine--tRNA ligase from Ignicoccus hospitalis (strain KIN4/I / DSM 18386 / JCM 14125).